A 208-amino-acid polypeptide reads, in one-letter code: Large ribosomal subunit protein eL13 (208 aa).

Phosphoserine is present on residues serine 177 and serine 180.

It belongs to the eukaryotic ribosomal protein eL13 family. In terms of assembly, component of the large ribosomal subunit (LSU). Mature yeast ribosomes consist of a small (40S) and a large (60S) subunit. The 40S small subunit contains 1 molecule of ribosomal RNA (18S rRNA) and at least 33 different proteins. The large 60S subunit contains 3 rRNA molecules (25S, 5.8S and 5S rRNA) and at least 46 different proteins.

It is found in the cytoplasm. Its function is as follows. Component of the ribosome, a large ribonucleoprotein complex responsible for the synthesis of proteins in the cell. The small ribosomal subunit (SSU) binds messenger RNAs (mRNAs) and translates the encoded message by selecting cognate aminoacyl-transfer RNA (tRNA) molecules. The large subunit (LSU) contains the ribosomal catalytic site termed the peptidyl transferase center (PTC), which catalyzes the formation of peptide bonds, thereby polymerizing the amino acids delivered by tRNAs into a polypeptide chain. The nascent polypeptides leave the ribosome through a tunnel in the LSU and interact with protein factors that function in enzymatic processing, targeting, and the membrane insertion of nascent chains at the exit of the ribosomal tunnel. In Schizosaccharomyces pombe (strain 972 / ATCC 24843) (Fission yeast), this protein is Large ribosomal subunit protein eL13 (rpl13).